The sequence spans 238 residues: Ditrans,polycis-undecaprenyl-diphosphate synthase ((2E,6E)-farnesyl-diphosphate specific) (238 aa).

Asp14 is a catalytic residue. Asp14 lines the Mg(2+) pocket. Substrate is bound by residues Gly15–Arg18, Trp19, Arg27, His31, and Ser59–Glu61. Asn62 (proton acceptor) is an active-site residue. Residues Trp63, Arg65, Arg182, and Arg188–Ser190 contribute to the substrate site. Glu201 is a Mg(2+) binding site.

Belongs to the UPP synthase family. As to quaternary structure, homodimer. Mg(2+) serves as cofactor.

The catalysed reaction is 8 isopentenyl diphosphate + (2E,6E)-farnesyl diphosphate = di-trans,octa-cis-undecaprenyl diphosphate + 8 diphosphate. In terms of biological role, catalyzes the sequential condensation of isopentenyl diphosphate (IPP) with (2E,6E)-farnesyl diphosphate (E,E-FPP) to yield (2Z,6Z,10Z,14Z,18Z,22Z,26Z,30Z,34E,38E)-undecaprenyl diphosphate (di-trans,octa-cis-UPP). UPP is the precursor of glycosyl carrier lipid in the biosynthesis of bacterial cell wall polysaccharide components such as peptidoglycan and lipopolysaccharide. This is Ditrans,polycis-undecaprenyl-diphosphate synthase ((2E,6E)-farnesyl-diphosphate specific) from Legionella pneumophila subsp. pneumophila (strain Philadelphia 1 / ATCC 33152 / DSM 7513).